The chain runs to 486 residues: Flavin-dependent monooxygenase pboD (486 aa).

FAD-binding residues include D51, G65, and R124. Residue R203 is part of the active site. FAD-binding residues include D344 and G357.

This sequence belongs to the paxM FAD-dependent monooxygenase family. Requires FAD as cofactor.

Its pathway is secondary metabolite biosynthesis. Its function is as follows. Flavin-dependent monooxygenase; part of the gene cluster that mediates the biosynthesis of protubonine B, a hydroxylated and diacetylated cyclo-L-Trp-L-Leu derivative. Within the pathway, pboD catalyzes the hydroxylation at C-3 of the indole ring of cyclo-L-Trp-L-Leu and subsequent formation of the pyrrolidine ring, eading to the production of protubonine D. PboD is also able to accept other cyclodipeptides (CDPs) as substrates, including cyclo-L-Trp-L-Trp, cyclo-L-Trp-L-Tyr, cyclo-L-Trp-L-Phe, cyclo-L-Trp-L-Met, cyclo-L-Trp-L-Ala, cyclo-L-Trp-L-Pro and cyclo-L-Trp-Gly. Assays with cyclo-L-Trp-L-Trp, cyclo-L-Trp-L-Tyr, cyclo-L-Trp-L-Phe show similar or even slightly higher conversion yields, compared with that of the natural substrate cyclo-L-Trp-L-Leu, whereas cyclo-L-Trp-L-Pro and cyclo-L-Trp-Gly are accepted by PboD but only with conversion yields of 10 and 4%, respectively. Cyclo-L-Trp-L-His is not accepted as a substrate. The first step of the protubonine B synthesis is performed by the nonribosomal peptide synthetase pboA that catalyzes the formation of cyclo-L-Trp-L-Leu by condensing L-Leu with L-Trp. The flavin-dependent monooxygenase pboD is responsible for hydroxylation at C-3 of the indole ring and subsequent formation of the pyrrolidine ring, leadind to protubonine D. Protubonine D is further diacetylated by two acetyltransferases, pboB and pboC, to form the final product protubonine B via protubonine C. The chain is Flavin-dependent monooxygenase pboD from Aspergillus ustus.